The following is a 611-amino-acid chain: Guanylate-binding protein 6 (611 aa).

A GTPase domain (Globular) region spans residues 1–308 (MTQPQMAPIC…NAINSGAVPC (308 aa)). The 243-residue stretch at 33–275 (SQPVVVVAIV…FVSYIFTYAK (243 aa)) folds into the GB1/RHD3-type G domain. GTP-binding positions include 43–50 (GLYRTGKS), 65–67 (LGS), and 95–99 (DTEGL).

Belongs to the TRAFAC class dynamin-like GTPase superfamily. GB1/RHD3 GTPase family. GB1 subfamily.

Its subcellular location is the cytoplasmic vesicle. It catalyses the reaction GTP + H2O = GDP + phosphate + H(+). Its function is as follows. Interferon (IFN)-inducible GTPase that plays important roles in innate immunity against a diverse range of bacterial, viral and protozoan pathogens, such as bacterial pathogens Listeria monocytogenes and Mycobacterium bovis BCG as well as the protozoan pathogen Toxoplasma gondii. Confers protection to several pathogens, including the bacterial pathogens Listeria monocytogenes and Mycobacterium bovis BCG as well as the protozoan pathogen Toxoplasma gondii. The chain is Guanylate-binding protein 6 (Gbp6) from Mus musculus (Mouse).